We begin with the raw amino-acid sequence, 297 residues long: Urease accessory protein UreD (297 aa).

This sequence belongs to the UreD family. As to quaternary structure, ureD, UreF and UreG form a complex that acts as a GTP-hydrolysis-dependent molecular chaperone, activating the urease apoprotein by helping to assemble the nickel containing metallocenter of UreC. The UreE protein probably delivers the nickel.

It localises to the cytoplasm. Required for maturation of urease via the functional incorporation of the urease nickel metallocenter. The chain is Urease accessory protein UreD from Anaeromyxobacter sp. (strain Fw109-5).